A 286-amino-acid polypeptide reads, in one-letter code: MSATDLASLEKTIEAAFDNRDNVNMSTKGEVRDAVEAALNLLDEGKARVAERGADGVWTVNQWLKKAVLLSFRLNDMQVVKGGSGNSTWWDKVPSKFENWGENQFRASGFRAVPNCVVRRSAYIAPNAILMPSFVNLGAYVGEGTMVDTWATVGSCAQIGKHVHLSGGVGIGGVLEPMQAGPTIIEDNCFIGARSEVVEGCIIREGSVLGMGVYIGKSTKIVDRATGEVMYGEVPPYSVVVAGSMASANATMANGLPAPHLYCAVIVKRVDEQTRSKTGINELLRD.

Substrate-binding residues include R111 and D148.

This sequence belongs to the transferase hexapeptide repeat family. Homotrimer.

Its subcellular location is the cytoplasm. It carries out the reaction (S)-2,3,4,5-tetrahydrodipicolinate + succinyl-CoA + H2O = (S)-2-succinylamino-6-oxoheptanedioate + CoA. It functions in the pathway amino-acid biosynthesis; L-lysine biosynthesis via DAP pathway; LL-2,6-diaminopimelate from (S)-tetrahydrodipicolinate (succinylase route): step 1/3. This Rhizobium etli (strain ATCC 51251 / DSM 11541 / JCM 21823 / NBRC 15573 / CFN 42) protein is 2,3,4,5-tetrahydropyridine-2,6-dicarboxylate N-succinyltransferase.